Here is an 867-residue protein sequence, read N- to C-terminus: Schizokinen transporter SchT (867 aa).

The segment at H40–A62 is disordered. Residues E46–A62 are compositionally biased toward polar residues. The TonB box signature appears at I185–T192. The TBDR plug domain maps to P197–R307. The 555-residue stretch at K313 to W867 folds into the TBDR beta-barrel domain. A TonB C-terminal box motif is present at residues A850–W867.

It belongs to the TonB-dependent receptor family.

The protein resides in the cell outer membrane. Functionally, involved in the TonB-dependent uptake of iron in complex with schizokinen, a dihydroxamate-type siderophore. This chain is Schizokinen transporter SchT, found in Nostoc sp. (strain PCC 7120 / SAG 25.82 / UTEX 2576).